A 252-amino-acid polypeptide reads, in one-letter code: Protein Flattop homolog (252 aa).

Positions 177–252 (TEKRRRKRTI…EKERKAAKGH (76 aa)) are disordered. Basic and acidic residues predominate over residues 218 to 252 (PKDKPKDKPKDKEAGKKDKTKDKGKEKERKAAKGH).

Belongs to the Flattop family.

The sequence is that of Protein Flattop homolog from Drosophila melanogaster (Fruit fly).